The following is a 198-amino-acid chain: HTH-type transcriptional regulator BetI (198 aa).

Residues 8 to 68 (PIRRQQLIEA…ATMRYLIRHL (61 aa)) enclose the HTH tetR-type domain. Positions 31–50 (SIAQIAKRAGVSNGIISHYF) form a DNA-binding region, H-T-H motif.

It functions in the pathway amine and polyamine biosynthesis; betaine biosynthesis via choline pathway [regulation]. In terms of biological role, repressor involved in the biosynthesis of the osmoprotectant glycine betaine. It represses transcription of the choline transporter BetT and the genes of BetAB involved in the synthesis of glycine betaine. The sequence is that of HTH-type transcriptional regulator BetI from Yersinia pseudotuberculosis serotype O:1b (strain IP 31758).